The chain runs to 4128 residues: DNA-dependent protein kinase catalytic subunit (4128 aa).

N6-acetyllysine is present on Lys117. The HEAT 1 repeat unit spans residues 288-323 (DNYVSLFEVLLKWCAHTNVELKKAALSALESFLKQV). A phosphoserine mark is found at Ser511 and Ser687. Residue Lys828 is modified to N6-acetyllysine. Phosphoserine occurs at positions 841 and 893. One copy of the HEAT 2 repeat lies at 1004 to 1040 (QDTVALLEAILDGIVDPVDSTLRDFCGRCIREFLKWS). Ser1065 carries the post-translational modification Phosphoserine. At Lys1209 the chain carries N6-acetyllysine. An interaction with C1D region spans residues 1503–1538 (LDLSCKQLASGLLELAFAFGGLCERLVSLLLNPAVL). The segment at 1503–1538 (LDLSCKQLASGLLELAFAFGGLCERLVSLLLNPAVL) is leucine-zipper. Residues 1723-1756 (PMQSREFPPGTPRFNNYVDCMKKFLDALELSQSP) form a TPR 1 repeat. Position 1970 is an N6-acetyllysine (Lys1970). The disordered stretch occupies residues 2050 to 2073 (QSYSYSSQDPRPATGRFRRREQRD). The residue at position 2056 (Ser2056) is a Phosphoserine; by autocatalysis. Position 2259 is an N6-acetyllysine (Lys2259). The interval 2436–3212 (LDIIYKMMPK…DNSMNVDQDG (777 aa)) is KIP-binding. Phosphothreonine is present on Thr2535. Thr2609 is subject to Phosphothreonine; by autocatalysis. At Ser2612 the chain carries Phosphoserine; by autocatalysis. Phosphothreonine; by autocatalysis occurs at positions 2638 and 2647. Positions 2737 to 2765 (EKLSLMYARKGVAEQKREKEIKSELKMKQ) are may split the end of the DNA molecule, with the two strands separating around the region. Position 2789 is a phosphoserine (Ser2789). An FAT domain is found at 2906 to 3539 (PAKRVRGKAR…VYPFIISSES (634 aa)). TPR repeat units lie at residues 2920-2948 (VLRW…SEIG) and 2949-2982 (TKQI…QDWV). The disordered stretch occupies residues 3200–3222 (LPEDNSMNVDQDGDPSDRMEVQE). Ser3205 is modified (phosphoserine). An N6-acetyllysine mark is found at Lys3241, Lys3260, Lys3621, Lys3638, and Lys3642. Positions 3722 to 4053 (FDERVTVMAS…ICYAKRKLAG (332 aa)) constitute a PI3K/PI4K catalytic domain. The segment at 3728–3734 (VMASLRR) is G-loop. Phosphoserine is present on residues Ser3731 and Ser3821. Residues 3919–3927 (GIGDRHLNN) are catalytic loop. Positions 3939 to 3964 (GIDFGHAFGSATQFLPVPELMPFRLT) are activation loop. Ser4026 is subject to Phosphoserine. The FATC domain maps to 4096–4128 (SGLSEETQVKCLMDQATDPNILGRTWEGWEPWM).

Belongs to the PI3/PI4-kinase family. As to quaternary structure, DNA-PK is a heterotrimer of PRKDC and the Ku dimer (composed of XRCC6/Ku70 and XRCC5/Ku86). Formation of this complex may be promoted by interaction with ILF3. Component of the core long-range non-homologous end joining (NHEJ) complex (also named DNA-PK complex) composed of PRKDC, LIG4, XRCC4, XRCC6/Ku70, XRCC5/Ku86 and NHEJ1/XLF. Additional component of the NHEJ complex includes PAXX. Following autophosphorylation, PRKDC dissociates from DNA. Interacts with DNA-PKcs-interacting protein (KIP) with the region upstream the kinase domain. PRKDC alone also interacts with and phosphorylates DCLRE1C, thereby activating the latent endonuclease activity of this protein. Interacts with C1D. Interacts with TTI1 and TELO2. Interacts with CIB1. Interacts with SETX. Interacts with NR4A3; the DNA-dependent protein kinase complex DNA-PK phosphorylates and activates NR4A3 and prevents NR4A3 ubiquitination and degradation. Interacts with BRAT1. Part of the HDP-RNP complex composed of at least HEXIM1, PRKDC, XRCC5, XRCC6, paraspeckle proteins (SFPQ, NONO, PSPC1, RBM14, and MATR3) and NEAT1 RNA. Interacts with KAT5. Post-translationally, autophosphorylated at two clusters, the T2609 cluster and the S2056 cluster. Autophosphorylated on Ser-2056, Thr-2609, Thr-2638 and Thr-2647. Ser-2056 and Thr-2609 are DNA damage-inducible phosphorylation sites (inducible with ionizing radiation, IR) dephosphorylated by PPP5C. Autophosphorylation induces a conformational change that leads to remodeling of the DNA-PK complex, requisite for efficient end processing and DNA repair. Autophosphorylation in trans within DNA-PK complexes loaded on DNA ends leads to the dissociation of PRKDC from DNA and the transition into the short-range NHEJ complex. Autophosphorylation of the T2609 cluster is required for hematopoietic development and protein synthesis in erythrocytes precursors. S-nitrosylated by GAPDH. In terms of processing, polyubiquitinated by RNF144A, leading to proteasomal degradation.

Its subcellular location is the nucleus. The protein resides in the nucleolus. The protein localises to the cytoplasm. It is found in the cytosol. The enzyme catalyses L-seryl-[protein] + ATP = O-phospho-L-seryl-[protein] + ADP + H(+). It carries out the reaction L-threonyl-[protein] + ATP = O-phospho-L-threonyl-[protein] + ADP + H(+). With respect to regulation, activity seems to be attenuated by autophosphorylation. Binding to the SL1 region of U3 small nucleolar RNA promotes auto-phosphorylation activity. Inhibited by wortmannin. Serine/threonine-protein kinase that acts as a molecular sensor for DNA damage. Involved in DNA non-homologous end joining (NHEJ) required for double-strand break (DSB) repair and V(D)J recombination. Must be bound to DNA to express its catalytic properties. Promotes processing of hairpin DNA structures in V(D)J recombination by activation of the hairpin endonuclease artemis (DCLRE1C). Recruited by XRCC5 and XRCC6 to DNA ends and is required to (1) protect and align broken ends of DNA, thereby preventing their degradation, (2) and sequester the DSB for repair by NHEJ. Acts as a scaffold protein to aid the localization of DNA repair proteins to the site of damage. The assembly of the DNA-PK complex at DNA ends is also required for the NHEJ ligation step. Found at the ends of chromosomes, suggesting a further role in the maintenance of telomeric stability and the prevention of chromosomal end fusion. Also involved in modulation of transcription. As part of the DNA-PK complex, involved in the early steps of ribosome assembly by promoting the processing of precursor rRNA into mature 18S rRNA in the small-subunit processome. Binding to U3 small nucleolar RNA, recruits PRKDC and XRCC5/Ku86 to the small-subunit processome. Recognizes the substrate consensus sequence [ST]-Q. Phosphorylates 'Ser-139' of histone variant H2AX, thereby regulating DNA damage response mechanism. Phosphorylates ASF1A, DCLRE1C, c-Abl/ABL1, histone H1, HSPCA, c-jun/JUN, p53/TP53, PARP1, POU2F1, DHX9, FH, SRF, NHEJ1/XLF, XRCC1, XRCC4, XRCC5, XRCC6, WRN, MYC and RFA2. Can phosphorylate C1D not only in the presence of linear DNA but also in the presence of supercoiled DNA. Ability to phosphorylate p53/TP53 in the presence of supercoiled DNA is dependent on C1D. Acts as a regulator of the phosphatidylinositol 3-kinase/protein kinase B signal transduction by mediating phosphorylation of 'Ser-473' of protein kinase B (PKB/AKT1, PKB/AKT2, PKB/AKT3), promoting their activation. Contributes to the determination of the circadian period length by antagonizing phosphorylation of CRY1 'Ser-588' and increasing CRY1 protein stability, most likely through an indirect mechanism. Plays a role in the regulation of DNA virus-mediated innate immune response by assembling into the HDP-RNP complex, a complex that serves as a platform for IRF3 phosphorylation and subsequent innate immune response activation through the cGAS-STING pathway. Also regulates the cGAS-STING pathway by catalyzing phosphorylation of CGAS, thereby impairing CGAS oligomerization and activation. Also regulates the cGAS-STING pathway by mediating phosphorylation of PARP1. In Homo sapiens (Human), this protein is DNA-dependent protein kinase catalytic subunit (PRKDC).